Here is a 160-residue protein sequence, read N- to C-terminus: Cytochrome b6-f complex subunit 4 (160 aa).

A run of 3 helical transmembrane segments spans residues 36-56, 95-115, and 131-151; these read LLYIFPVCIFGTIACTVGLSV, LLGVLLMAGVPVGLLTVPFIE, and TVFLLGTVVAIWLGIGAALPI.

The protein belongs to the cytochrome b family. PetD subfamily. As to quaternary structure, the 4 large subunits of the cytochrome b6-f complex are cytochrome b6, subunit IV (17 kDa polypeptide, petD), cytochrome f and the Rieske protein, while the 4 small subunits are petG, petL, petM and petN. The complex functions as a dimer.

It is found in the plastid. It localises to the chloroplast thylakoid membrane. Its function is as follows. Component of the cytochrome b6-f complex, which mediates electron transfer between photosystem II (PSII) and photosystem I (PSI), cyclic electron flow around PSI, and state transitions. This is Cytochrome b6-f complex subunit 4 from Chaetosphaeridium globosum (Charophycean green alga).